The primary structure comprises 366 residues: Leucine-rich repeat-containing protein 58 (366 aa).

Position 19 is a phosphoserine (Ser19). 9 LRR repeats span residues 40-61 (ALLR…LGGG), 64-86 (HLQL…LTLS), 87-108 (GLRT…PKGL), 116-138 (SLQV…LELR), 139-161 (ALQT…ENLR), 162-184 (SLEC…ANLP), 185-206 (SLNY…LSQL), 208-229 (SLRS…ILNL), and 231-251 (HLEE…RDLT). Low complexity predominate over residues 337–346 (ASHSSTSQSE). The disordered stretch occupies residues 337–356 (ASHSSTSQSESDSEDEASVA).

The polypeptide is Leucine-rich repeat-containing protein 58 (Lrrc58) (Mus musculus (Mouse)).